The primary structure comprises 70 residues: uncharacterized protein (70 aa).

Transmembrane regions (helical) follow at residues 19–39 (VIALVVFGGLIVSVVGFVVGL) and 40–60 (LFKLLVFVALVGGLIYVVRKF).

Its subcellular location is the cell membrane. This is an uncharacterized protein from Streptomyces coelicolor (strain ATCC BAA-471 / A3(2) / M145).